The sequence spans 237 residues: MDFLYPYPPLISGILVKRYKRFLADVELDNGEIVTAHCPNTGPMTGVCQVGAQVYLSKSDNPQRKLAYTWEMIQIDGTWVGVNTALPNRVIKQALADRIFPNLTNSYDTFKPEVPYGKDKKSRIDFLLTKPEEKSIYVEVKNTTLSQEKLALFPDTETTRGQKHLQELIDILPTARAVMLYFINRGDCTHFSPGDAYDRRYGELFRQAIAAGVEVMPCRFMVNPEGVKFLGMAELVV.

The protein belongs to the SfsA family.

This chain is Sugar fermentation stimulation protein homolog, found in Synechocystis sp. (strain ATCC 27184 / PCC 6803 / Kazusa).